The chain runs to 514 residues: Nuclear hormone receptor family member nhr-85 (514 aa).

Residues 28–48 are disordered; the sequence is TSFSSPPATSSSSLLSPSPSS. A DNA-binding region (nuclear receptor) is located at residues 110–186; the sequence is TILCQVCSDK…VGMSRDAVRF (77 aa). NR C4-type zinc fingers lie at residues 113–133 and 150–174; these read CQVC…CEGC and CTRA…LKKC. The NR LBD domain maps to 216-514; sequence QYENLTEVMH…VSPVPTTLSE (299 aa). A disordered region spans residues 465-514; it reads ERPRRISSSGAQEPLNLSLPHVRHQVKRDVDSDEQLEEMKVSPVPTTLSE.

The protein belongs to the nuclear hormone receptor family.

It is found in the nucleus. Functionally, orphan nuclear receptor. This Caenorhabditis elegans protein is Nuclear hormone receptor family member nhr-85 (nhr-85).